The primary structure comprises 577 residues: Proline--tRNA ligase (577 aa).

Belongs to the class-II aminoacyl-tRNA synthetase family. ProS type 1 subfamily. As to quaternary structure, homodimer.

The protein localises to the cytoplasm. It catalyses the reaction tRNA(Pro) + L-proline + ATP = L-prolyl-tRNA(Pro) + AMP + diphosphate. In terms of biological role, catalyzes the attachment of proline to tRNA(Pro) in a two-step reaction: proline is first activated by ATP to form Pro-AMP and then transferred to the acceptor end of tRNA(Pro). As ProRS can inadvertently accommodate and process non-cognate amino acids such as alanine and cysteine, to avoid such errors it has two additional distinct editing activities against alanine. One activity is designated as 'pretransfer' editing and involves the tRNA(Pro)-independent hydrolysis of activated Ala-AMP. The other activity is designated 'posttransfer' editing and involves deacylation of mischarged Ala-tRNA(Pro). The misacylated Cys-tRNA(Pro) is not edited by ProRS. The polypeptide is Proline--tRNA ligase (Chlamydia felis (strain Fe/C-56) (Chlamydophila felis)).